The primary structure comprises 100 residues: uncharacterized protein (100 aa).

It is found in the secreted. This is an uncharacterized protein from Mycobacterium leprae (strain TN).